A 340-amino-acid chain; its full sequence is Outer membrane protein B (340 aa).

The first 26 residues, 1-26 (MSSKLVNSLRLTFLSFLGIVSTSLDA), serve as a signal peptide directing secretion.

It belongs to the chlamydial OMP family.

Its subcellular location is the cell outer membrane. This is Outer membrane protein B (ompB) from Chlamydia muridarum (strain MoPn / Nigg).